We begin with the raw amino-acid sequence, 276 residues long: Extracellular metalloprotease VDBG_07883 (276 aa).

An N-terminal signal peptide occupies residues 1-17 (MQSKFLWIAAASAATAA). 2 N-linked (GlcNAc...) asparagine glycosylation sites follow: Asn-70 and Asn-102. Residue His-191 coordinates Zn(2+). The active site involves Glu-192. Residue His-195 coordinates Zn(2+). Asn-222 carries an N-linked (GlcNAc...) asparagine glycan. The cysteines at positions 227 and 254 are disulfide-linked.

Belongs to the peptidase M43B family.

It is found in the secreted. Its function is as follows. Secreted metalloproteinase that allows assimilation of proteinaceous substrates. The sequence is that of Extracellular metalloprotease VDBG_07883 from Verticillium alfalfae (strain VaMs.102 / ATCC MYA-4576 / FGSC 10136) (Verticillium wilt of alfalfa).